The chain runs to 547 residues: Membrane protein insertase YidC (547 aa).

Transmembrane regions (helical) follow at residues 6-26 (LILVLIFTFSSFMLWENWQKY), 328-348 (VVDYGWLTVVAAPIFWALEAI), 351-371 (LVGNWGWAIVVLTIMIKAVFF), 425-445 (LPILVQIPVFIALYWVLLGAV), 459-479 (LASADPYYILPVIMMVSMFVQ), and 499-519 (PLIFGFMFFWFPAGLVLYWVV).

Belongs to the OXA1/ALB3/YidC family. Type 1 subfamily. In terms of assembly, interacts with the Sec translocase complex via SecD. Specifically interacts with transmembrane segments of nascent integral membrane proteins during membrane integration.

The protein resides in the cell inner membrane. Required for the insertion and/or proper folding and/or complex formation of integral membrane proteins into the membrane. Involved in integration of membrane proteins that insert both dependently and independently of the Sec translocase complex, as well as at least some lipoproteins. Aids folding of multispanning membrane proteins. This is Membrane protein insertase YidC from Dechloromonas aromatica (strain RCB).